The primary structure comprises 104 residues: Type VII secretion system extracellular protein B (104 aa).

The protein belongs to the WXG100 family. In terms of assembly, homodimer. When mixed with EsxA does not form heterodimers. Forms heterodimers with EsxD.

It is found in the secreted. In terms of biological role, virulence factor that is important for the establishment of infection in the host. EsxB is required for EsxA synthesis as well as secretion. Mediates together with EsxA the release of S.aureus from the host cell. Also inhibits host cytokine production and thus modulates dendritic cell-mediated immunity. This is Type VII secretion system extracellular protein B from Staphylococcus aureus (strain USA300).